Here is a 251-residue protein sequence, read N- to C-terminus: Proteasome subunit alpha type-4-like (251 aa).

The protein belongs to the peptidase T1A family. As to quaternary structure, the 26S proteasome consists of a 20S proteasome core and two 19S regulatory subunits. The 20S proteasome core is composed of 28 subunits that are arranged in four stacked rings, resulting in a barrel-shaped structure. The two end rings are each formed by seven alpha subunits, and the two central rings are each formed by seven beta subunits. The catalytic chamber with the active sites is on the inside of the barrel. In terms of tissue distribution, testis, prominent after meiosis II. After meiosis, predominantly localized to the haploid spermatid nuclei of the 64-cell cysts, remaining during the elongation and condensation of the spermatid nuclei. In mature, motile sperm, expression is seen exclusively in the sperm head.

It is found in the nucleus. Functionally, the proteasome is a multicatalytic proteinase complex which is characterized by its ability to cleave peptides with Arg, Phe, Tyr, Leu, and Glu adjacent to the leaving group at neutral or slightly basic pH. The proteasome has an ATP-dependent proteolytic activity. The protein is Proteasome subunit alpha type-4-like (Prosalpha3T) of Drosophila melanogaster (Fruit fly).